The chain runs to 331 residues: UPF0324 membrane protein SA0329 (331 aa).

11 helical membrane passes run 9–26 (FMIG…SFLA), 31–48 (ILDK…AILY), 69–88 (LLRF…DIIG), 93–115 (LLAI…NKLL), 122–144 (ALLL…APIF), 154–176 (SIGI…YAIF), 183–202 (YGAW…LAGG), 217–234 (LGRV…ILIM), 247–269 (ISIP…VTIP), 273–295 (LNIL…GLNV), and 308–330 (LMTI…HWLY).

Belongs to the UPF0324 family.

Its subcellular location is the cell membrane. The chain is UPF0324 membrane protein SA0329 from Staphylococcus aureus (strain N315).